The primary structure comprises 555 residues: MDIKRTILWVIFSMSLVLLYDNWQRANGHASMFFPSANTQQAAPAGAGGATPQADVPKANATNAAPGTVPAAPQAAAQPVGEKVTVTTDEVRAEIDTAGGILSRLELLNEHEKDGAPVVLLERDVNRTYLARSGLIGGDLPNHTTVFTVAPGARTLAPGQDKLDVVLTAEKNGVKFVKTYTFHKGSYVVDTRFDVTNTGTAAVSPTLYLELARDGSKVEKSQFYSTFTGPAIYTNADKYHKLTFEDIAKGKATVPAATDNGWVAMVQHYFASAWIPQTGKQHSFYAEQIDPNLYRVGIQQPLGQLAPGATVSTDARLFAGPQEERMLEQITPGLELVKDYGWLTILAKPLFWLLEKLHGFLGNWGWSIIGLTVLIKLVFFPLSAASYKSMGKMKDLQPRMTAIRERHKGDPQKMNQEMMALYRTEKVNPLGGCLPIVIQIPVFIALYWVLLSSVEMRGAPWLGWIHDLSVPDPFYILPIVMAVSMFVQTRLNPTPPDPVQAKVMMIMPLVFSFMFFFFPAGLVLYWVVNNILSIAQQWQINRMLGKGKTAAVAKS.

The helical transmembrane segment at 7-24 threads the bilayer; it reads ILWVIFSMSLVLLYDNWQ. Composition is skewed to low complexity over residues 40–54 and 64–81; these read QQAAPAGAGGATPQA and AAPGTVPAAPQAAAQPVG. The disordered stretch occupies residues 40–81; sequence QQAAPAGAGGATPQADVPKANATNAAPGTVPAAPQAAAQPVG. Transmembrane regions (helical) follow at residues 334 to 354, 360 to 380, 430 to 450, 468 to 488, and 503 to 523; these read LELVKDYGWLTILAKPLFWLL, FLGNWGWSIIGLTVLIKLVFF, LGGCLPIVIQIPVFIALYWVL, LSVPDPFYILPIVMAVSMFVQ, and VMMIMPLVFSFMFFFFPAGLV.

Belongs to the OXA1/ALB3/YidC family. Type 1 subfamily. As to quaternary structure, interacts with the Sec translocase complex via SecD. Specifically interacts with transmembrane segments of nascent integral membrane proteins during membrane integration.

The protein resides in the cell inner membrane. Its function is as follows. Required for the insertion and/or proper folding and/or complex formation of integral membrane proteins into the membrane. Involved in integration of membrane proteins that insert both dependently and independently of the Sec translocase complex, as well as at least some lipoproteins. Aids folding of multispanning membrane proteins. The protein is Membrane protein insertase YidC of Cupriavidus metallidurans (strain ATCC 43123 / DSM 2839 / NBRC 102507 / CH34) (Ralstonia metallidurans).